The following is a 120-amino-acid chain: U15-barytoxin-Tl1c (120 aa).

A signal peptide spans 1–16; sequence MKLFMVLVASFAFAVA. Intrachain disulfides connect Cys55-Cys73, Cys66-Cys79, Cys70-Cys118, and Cys72-Cys89.

Belongs to the neurotoxin 03 (Tx2) family. 03 subfamily. In terms of tissue distribution, expressed by the venom gland.

It is found in the secreted. Its function is as follows. Ion channel inhibitor. In Trittame loki (Brush-footed trapdoor spider), this protein is U15-barytoxin-Tl1c.